The primary structure comprises 545 residues: MATNYIFVTGGVVSSLGKGIAAASLAAILEARGLNVTIMKLDPYINVDPGTMSPTQHGEVFVTQDGAETDLDLGHYERFIRTKMTKRNNFTTGKIYSEVLRKERRGDYLGATIQVIPHITNEIKDRVIAGAQGHDVVIVEVGGTVGDIESLPFLEALRQLAVQVGREHTLFMHLTLVPYIPTAGEVKTKPTQHSVKELLSIGIQPDVLICRSDRMIPPNERAKIALFCNVAERAVISLKDVNSIYQIPALLKSQGLDDFVCERFRLTCPEADLTEWEQVLYKQANPVGEVTIGMVGKYTELPDAYKSVNEALKHAGLTNRLSVNIKYIDSQDVETKGVEVLKGVDGILVPGGFGYRGVEGKIRTAQYARENKIPYLGICLGMQIALIEYARNVAGLTKANSSEFDKDCEQPVVALITEWQDAEGNTEVRTDESDLGGTMRLGAQQCHLVSGSRARELYGKETIEERHRHRYEVNNTLLPQIEKAGLKVTGLSADKKLVEIIEVPNHPWFVACQFHPEFTSTPRDGHPLFAGFVKAAYENHKKSVK.

The segment at M1–L266 is amidoligase domain. A CTP-binding site is contributed by S14. S14 contributes to the UTP binding site. Residues S15–I20 and D72 each bind ATP. Positions 72 and 140 each coordinate Mg(2+). CTP contacts are provided by residues D147–E149, K187–Q192, and K223. UTP contacts are provided by residues K187–Q192 and K223. K239 to V241 contacts ATP. The region spanning T291 to K542 is the Glutamine amidotransferase type-1 domain. G352 is a binding site for L-glutamine. Residue C379 is the Nucleophile; for glutamine hydrolysis of the active site. L-glutamine contacts are provided by residues L380–Q383, E403, and R470. Catalysis depends on residues H515 and E517.

The protein belongs to the CTP synthase family. Homotetramer.

It carries out the reaction UTP + L-glutamine + ATP + H2O = CTP + L-glutamate + ADP + phosphate + 2 H(+). It catalyses the reaction L-glutamine + H2O = L-glutamate + NH4(+). The catalysed reaction is UTP + NH4(+) + ATP = CTP + ADP + phosphate + 2 H(+). It functions in the pathway pyrimidine metabolism; CTP biosynthesis via de novo pathway; CTP from UDP: step 2/2. Its activity is regulated as follows. Allosterically activated by GTP, when glutamine is the substrate; GTP has no effect on the reaction when ammonia is the substrate. The allosteric effector GTP functions by stabilizing the protein conformation that binds the tetrahedral intermediate(s) formed during glutamine hydrolysis. Inhibited by the product CTP, via allosteric rather than competitive inhibition. Its function is as follows. Catalyzes the ATP-dependent amination of UTP to CTP with either L-glutamine or ammonia as the source of nitrogen. Regulates intracellular CTP levels through interactions with the four ribonucleotide triphosphates. In Haemophilus influenzae (strain PittGG), this protein is CTP synthase.